Here is a 392-residue protein sequence, read N- to C-terminus: Tropomodulin (392 aa).

Disordered stretches follow at residues 1–30, 59–90, and 118–138; these read MSQA…QLPS, DLNN…GPYK, and QKRG…PENG. Polar residues predominate over residues 16-29; the sequence is SAPSANSQQGTQLP. 2 stretches are compositionally biased toward basic and acidic residues: residues 76 to 90 and 122 to 138; these read RCRD…GPYK and KVYD…PENG.

The protein belongs to the tropomodulin family. Binds to the N-terminus of actin.

The protein localises to the cytoplasm. It localises to the cytoskeleton. In terms of biological role, acts as the pointed end capping protein which maintains the length and dynamics of the actin filament. Blocks the elongation and depolymerization of the actin filaments at the pointed end. The sequence is that of Tropomodulin (unc-94) from Caenorhabditis elegans.